The chain runs to 293 residues: Glycine--tRNA ligase alpha subunit (293 aa).

Belongs to the class-II aminoacyl-tRNA synthetase family. As to quaternary structure, tetramer of two alpha and two beta subunits.

It localises to the cytoplasm. The catalysed reaction is tRNA(Gly) + glycine + ATP = glycyl-tRNA(Gly) + AMP + diphosphate. This chain is Glycine--tRNA ligase alpha subunit, found in Picosynechococcus sp. (strain ATCC 27264 / PCC 7002 / PR-6) (Agmenellum quadruplicatum).